The following is a 169-amino-acid chain: Holo-[acyl-carrier-protein] synthase (169 aa).

2 residues coordinate Mg(2+): D8 and E50.

The protein belongs to the P-Pant transferase superfamily. AcpS family. Mg(2+) serves as cofactor.

It is found in the cytoplasm. The enzyme catalyses apo-[ACP] + CoA = holo-[ACP] + adenosine 3',5'-bisphosphate + H(+). Its function is as follows. Transfers the 4'-phosphopantetheine moiety from coenzyme A to a Ser of acyl-carrier-protein. This is Holo-[acyl-carrier-protein] synthase from Thermotoga maritima (strain ATCC 43589 / DSM 3109 / JCM 10099 / NBRC 100826 / MSB8).